We begin with the raw amino-acid sequence, 147 residues long: C-glycoside deglycosidase beta subunit (147 aa).

This sequence belongs to the C-glycoside deglycosidase beta subunit family. In terms of assembly, heterooctamer composed of four alpha subunits (DfgA) and four beta subunits (DfgB). It depends on Mn(2+) as a cofactor.

The catalysed reaction is 3''-dehydroisoorientin = 1,5-anhydro-D-erythro-hex-1-en-3-ulose + luteolin. It catalyses the reaction 3''-dehydroisovitexin = 1,5-anhydro-D-erythro-hex-1-en-3-ulose + apigenin. With respect to regulation, activity is strongly reduced in the presence of chelating agents. Functionally, carbon-carbon bond-cleaving enzyme which participates in the metabolism of C-glycosides. Acts on the C6-glycosylated compounds 3''-dehydroisoorientin (3''-oxo-homoorientin) and 3''-dehydroisovitexin (3''-oxo-isovitexin). This is C-glycoside deglycosidase beta subunit from Eubacterium cellulosolvens (strain ATCC 43171 / JCM 9499 / 6) (Cillobacterium cellulosolvens).